A 169-amino-acid chain; its full sequence is Gastrula zinc finger protein XlCGF62.1 (169 aa).

6 consecutive C2H2-type zinc fingers follow at residues 6 to 28, 34 to 56, 62 to 84, 90 to 113, 119 to 141, and 147 to 169; these read FICTECGKCFSEKRTLKHHIRTH, FICTDCGKCFSFEICLNRHYKTH, FICTECGKSFSDKSRLRVHHRSH, FTCTDCGKCFSVKSILNHHRQAIH, FICTECGKGFASKHYLHGHKRTH, and FVCTECGKGFASNYYLHVHKRTH.

It belongs to the krueppel C2H2-type zinc-finger protein family.

The protein localises to the nucleus. Functionally, may be involved in transcriptional regulation. The protein is Gastrula zinc finger protein XlCGF62.1 of Xenopus laevis (African clawed frog).